The primary structure comprises 1407 residues: DNA-directed RNA polymerase subunit beta' (1407 aa).

Positions 70, 72, 85, and 88 each coordinate Zn(2+). Mg(2+) contacts are provided by Asp-460, Asp-462, and Asp-464. Cys-814, Cys-888, Cys-895, and Cys-898 together coordinate Zn(2+).

The protein belongs to the RNA polymerase beta' chain family. The RNAP catalytic core consists of 2 alpha, 1 beta, 1 beta' and 1 omega subunit. When a sigma factor is associated with the core the holoenzyme is formed, which can initiate transcription. It depends on Mg(2+) as a cofactor. Zn(2+) is required as a cofactor.

It catalyses the reaction RNA(n) + a ribonucleoside 5'-triphosphate = RNA(n+1) + diphosphate. DNA-dependent RNA polymerase catalyzes the transcription of DNA into RNA using the four ribonucleoside triphosphates as substrates. The chain is DNA-directed RNA polymerase subunit beta' from Salmonella choleraesuis (strain SC-B67).